We begin with the raw amino-acid sequence, 109 residues long: Gliadoralin-A (109 aa).

A signal peptide spans 1–16 (MLVILLMVVVLALSSA). A Pyrrolidone carboxylic acid modification is found at Gln17. The interval 17-109 (QDPNRDFVVS…PRYQQPRRAV (93 aa)) is disordered. Over residues 35 to 109 (PSSQQGTVGG…PRYQQPRRAV (75 aa)) the composition is skewed to low complexity. Residues 107-109 (RAV) constitute a propeptide that is removed on maturation.

Post-translationally, predominantly proteolytically processed at its C-terminus before secretion to produce the major form gliadoralin A 1-90. Further proteloytically processed after secretion to produce minor forms. Potential substrate of transglutaminase. Found in saliva (at protein level). Secreted from the submandibular gland.

The protein localises to the secreted. Its function is as follows. May play a role in the formation of the protective mucosal protein pellicle involved in the reinforcement and protection of oral mucosal epithelial surface. The chain is Gliadoralin-A from Rattus norvegicus (Rat).